A 1403-amino-acid polypeptide reads, in one-letter code: Nidogen-2 (1403 aa).

An N-terminal signal peptide occupies residues 1 to 30; that stretch reads MFRDPTAGWLTPPSPLSLLVMLLLLSRVGA. Residues 108-274 enclose the NIDO domain; the sequence is PFLADIDTSH…GVWAFHIGSR (167 aa). Residues 323 to 403 are disordered; it reads EDVEYPPVEP…KQGRPVGEGE (81 aa). Residues S386 and S475 are each glycosylated (O-linked (Xyl...) (chondroitin sulfate) serine). Polar residues predominate over residues 386-395; the sequence is SASLDPQTKQ. The EGF-like 1 domain maps to 507-547; the sequence is NLETCEHSHGRCSQHAFCTDYTTGFCCHCQSRFYGNGKHCL. Disulfide bonds link C511–C524, C518–C533, and C535–C546. The 231-residue stretch at 551–781 folds into the Nidogen G2 beta-barrel domain; it reads APHRVNGKVS…GPVEVDSAPV (231 aa). 3 N-linked (GlcNAc...) asparagine glycosylation sites follow: N681, N716, and N726. Residues 782 to 823 enclose the EGF-like 2 domain; the sequence is GVNPCYDGSHTCDTTARCHPGTGVDYTCECTPGFQGDGRSCV. 18 disulfide bridges follow: C786–C799, C793–C809, C811–C822, C828–C841, C835–C850, C852–C865, C875–C890, C882–C900, C902–C913, C919–C930, C924–C939, C941–C952, C968–C991, C1002–C1009, C1011–C1033, C1047–C1071, C1082–C1089, and C1091–C1112. In terms of domain architecture, EGF-like 3; calcium-binding spans 824-862; that stretch reads DVNECATGFHRCGPNSVCVNLVGSYRCECRSGYEFADDQ. The EGF-like 4 domain maps to 871 to 914; the sequence is PPNPCLDGSHTCAPEGQARCIHHGGSSFSCACLPGFIGTGHQCS. In terms of domain architecture, EGF-like 5; calcium-binding spans 915–953; that stretch reads DVDECAENRCHEAAICYNTPGSFSCRCQPGYRGDGFHCT. Residues 946–948 carry the Cell attachment site motif; that stretch reads RGD. Thyroglobulin type-1 domains are found at residues 965-1033 and 1044-1112; these read LKPC…PPHC and RTVC…RPAC. The tract at residues 1021 to 1043 is disordered; it reads GTQTPPGSTPPHCGPPPEPTQRP. Positions 1027–1040 are enriched in pro residues; the sequence is GSTPPHCGPPPEPT. N-linked (GlcNAc...) asparagine glycosylation is present at N1152. LDL-receptor class B repeat units lie at residues 1182–1225, 1226–1268, 1269–1313, 1314–1355, and 1357–1401; these read RMVY…DHFR, RTMY…DPIR, GNLY…DPFS, KLLC…YADH, and YHTD…CPTG. Omega-N-methylarginine is present on R1336.

Interacts with LAMA2. Interacts with COL13A1. Interacts with EFEMP2. Post-translationally, highly N- and O-glycosylated.

The protein resides in the secreted. Its subcellular location is the extracellular space. It is found in the extracellular matrix. The protein localises to the basement membrane. Its function is as follows. Cell adhesion glycoprotein. Might be involved in osteoblast differentiation. It probably has a role in cell-extracellular matrix interactions. The protein is Nidogen-2 (Nid2) of Mus musculus (Mouse).